A 150-amino-acid chain; its full sequence is Protein-arginine-phosphatase (150 aa).

The active-site Nucleophile is Cys-7. 8 to 13 (TGNTCR) contacts substrate. Residue Arg-13 is part of the active site. Asp-118 acts as the Proton donor/acceptor in catalysis.

The protein belongs to the low molecular weight phosphotyrosine protein phosphatase family.

It carries out the reaction N(omega)-phospho-L-arginyl-[protein] + H2O = L-arginyl-[protein] + phosphate. Efficiently inhibited by Cu(2+) ion, Zn(2+) ion, sodium pyrophosphate and N-ethylmaleimide, while the addition of Mg(2+), Ca(2+) or Fe(3+) ions has minimal effect. Inhibited in a competitive manner by vanadate. Its function is as follows. Catalyzes the specific dephosphorylation of phosphoarginine residues in a large number of proteins. Counteracts the protein arginine kinase McsB in vivo. Can dephosphorylate CtsR-P; thus, can restore the DNA-binding ability of the CtsR repressor by reversing the McsB-mediated phosphorylation. Is the only active pArg phosphatase present in B.subtilis. Exhibits almost no activity against pSer, pThr, or pTyr peptides. Appears to play a role in B.subtilis stress resistance. Protein arginine phosphorylation has a physiologically important role and is involved in the regulation of many critical cellular processes, such as protein homeostasis, motility, competence, and stringent and stress responses, by regulating gene expression and protein activity. The protein is Protein-arginine-phosphatase (ywlE) of Bacillus subtilis (strain 168).